The primary structure comprises 291 residues: ATP synthase gamma chain (291 aa).

This sequence belongs to the ATPase gamma chain family. As to quaternary structure, F-type ATPases have 2 components, CF(1) - the catalytic core - and CF(0) - the membrane proton channel. CF(1) has five subunits: alpha(3), beta(3), gamma(1), delta(1), epsilon(1). CF(0) has three main subunits: a, b and c.

It is found in the cell inner membrane. Its function is as follows. Produces ATP from ADP in the presence of a proton gradient across the membrane. The gamma chain is believed to be important in regulating ATPase activity and the flow of protons through the CF(0) complex. This Rhodopseudomonas palustris (strain HaA2) protein is ATP synthase gamma chain.